The following is a 355-amino-acid chain: S-adenosylmethionine:tRNA ribosyltransferase-isomerase (355 aa).

It belongs to the QueA family. As to quaternary structure, monomer.

It localises to the cytoplasm. It catalyses the reaction 7-aminomethyl-7-carbaguanosine(34) in tRNA + S-adenosyl-L-methionine = epoxyqueuosine(34) in tRNA + adenine + L-methionine + 2 H(+). Its pathway is tRNA modification; tRNA-queuosine biosynthesis. In terms of biological role, transfers and isomerizes the ribose moiety from AdoMet to the 7-aminomethyl group of 7-deazaguanine (preQ1-tRNA) to give epoxyqueuosine (oQ-tRNA). This is S-adenosylmethionine:tRNA ribosyltransferase-isomerase from Jannaschia sp. (strain CCS1).